The following is a 94-amino-acid chain: Small ribosomal subunit protein uS19 (94 aa).

It belongs to the universal ribosomal protein uS19 family.

Protein S19 forms a complex with S13 that binds strongly to the 16S ribosomal RNA. This Endomicrobium trichonymphae protein is Small ribosomal subunit protein uS19.